The primary structure comprises 294 residues: FAD-dependent monooxygenase SAT1 (294 aa).

Residue aspartate 108 coordinates FAD.

It belongs to the paxM FAD-dependent monooxygenase family. Requires FAD as cofactor.

The protein operates within mycotoxin biosynthesis. Functionally, FAD-dependent monooxygenase; part of the satratoxin SC1 cluster involved in the biosynthesis of satratoxins, trichothecene mycotoxins that are associated with human food poisonings. Satratoxins are suggested to be made by products of multiple gene clusters (SC1, SC2 and SC3) that encode 21 proteins in all, including polyketide synthases, acetyltransferases, and other enzymes expected to modify the trichothecene skeleton. SC1 encodes 10 proteins, SAT1 to SAT10. The largest are SAT8, which encodes a putative polyketide synthase (PKS) with a conventional non-reducing architecture, and SAT10, a putative protein containing four ankyrin repeats and thus may be involved in protein scaffolding. The putative short-chain reductase SAT3 may assist the PKS in some capacity. SAT6 contains a secretory lipase domain and acts probably as a trichothecene esterase. SAT5 encodes a putative acetyltransferase, and so, with SAT6, may affect endogenous protection from toxicity. The probable transcription factor SAT9 may regulate the expression of the SC1 cluster. SC2 encodes proteins SAT11 to SAT16, the largest of which encodes the putative reducing PKS SAT13. SAT11 is a cytochrome P450 monooxygenase, while SAT14 and SAT16 are probable acetyltransferases. The SC2 cluster may be regulated by the transcription factor SAT15. SC3 is a small cluster that encodes 5 proteins, SAT17 to SAT21. SAT21 is a putative MFS-type transporter which may have a role in exporting secondary metabolites. The four other proteins putatively encoded in SC3 include the taurine hydroxylase-like protein SAT17, the O-methyltransferase SAT18, the acetyltransferase SAT19, and the Cys6-type zinc finger SAT20, the latter being probably involved in regulation of SC3 expression. This is FAD-dependent monooxygenase SAT1 from Stachybotrys chartarum (strain CBS 109288 / IBT 7711) (Toxic black mold).